A 481-amino-acid polypeptide reads, in one-letter code: Zinc finger CCCH domain-containing protein 4 (481 aa).

Residues 157-184 (RNRAHVCSFFIRGECTRGAECPYRHEMP) form a C3H1-type zinc finger. An RRM domain is found at 228–301 (KTLYVGGLNS…QRLKLTWGRP (74 aa)). Residues 329-481 (HNQPPPMQQY…DVSTATGSSQ (153 aa)) form a disordered region. Residues 331 to 345 (QPPPMQQYYMHPPPA) are compositionally biased toward pro residues. Composition is skewed to low complexity over residues 369-389 (AGGSSTENNGASSSSYMMPPH) and 399-410 (YMPSPYQQQYPP). Residues 423–444 (APPPAAYPYPQQPGPGSRPAPS) show a composition bias toward pro residues. Over residues 449–471 (SAISPDSAPAGSGAPSGSSQQAP) the composition is skewed to low complexity. Over residues 472–481 (DVSTATGSSQ) the composition is skewed to polar residues.

This Arabidopsis thaliana (Mouse-ear cress) protein is Zinc finger CCCH domain-containing protein 4.